The chain runs to 59 residues: UPF0434 protein lpg1920 (59 aa).

The protein belongs to the UPF0434 family.

In Legionella pneumophila subsp. pneumophila (strain Philadelphia 1 / ATCC 33152 / DSM 7513), this protein is UPF0434 protein lpg1920.